The primary structure comprises 139 residues: uncharacterized protein (139 aa).

The interval 83-109 (LIPPKKTSPATSSSLKPPRRPRGCLNG) is disordered. Positions 86–98 (PKKTSPATSSSLK) are enriched in low complexity.

It to M.pneumoniae MPN_091 and MPN_463.

This is an uncharacterized protein from Mycoplasma pneumoniae (strain ATCC 29342 / M129 / Subtype 1) (Mycoplasmoides pneumoniae).